The sequence spans 120 residues: Glycine cleavage system H protein (120 aa).

One can recognise a Lipoyl-binding domain in the interval Val17–Lys99. Residue Lys58 is modified to N6-lipoyllysine.

This sequence belongs to the GcvH family. In terms of assembly, the glycine cleavage system is composed of four proteins: P, T, L and H. Requires (R)-lipoate as cofactor.

Its function is as follows. The glycine cleavage system catalyzes the degradation of glycine. The H protein shuttles the methylamine group of glycine from the P protein to the T protein. The polypeptide is Glycine cleavage system H protein (Methylorubrum extorquens (strain PA1) (Methylobacterium extorquens)).